A 192-amino-acid chain; its full sequence is Adenylate kinase (192 aa).

Residue 10-18 (GVPGVGGTT) participates in ATP binding.

It belongs to the archaeal adenylate kinase family. In terms of assembly, monomer.

Its subcellular location is the cytoplasm. The catalysed reaction is AMP + ATP = 2 ADP. The sequence is that of Adenylate kinase from Methanococcus maripaludis (strain DSM 14266 / JCM 13030 / NBRC 101832 / S2 / LL).